A 430-amino-acid chain; its full sequence is MKQALRVAVSFFMLWAAVLHAEVRIEITQGVDSARPIGVVPFQWAGPGAAPEDIGGIVAADLRNSGKFNPLDRSRLPQQPGTAQEVQPAAWSALGIDAVVVGQVTPSPDGDYNVTYQLVDTGGAPGTVLAQNTYKVNKKWLRYAGHTASDEVFEKLTGIKGAFRTRIAYVVQTNGGQFPYELRVSDYDGYNQFTVHRSPQPLMSPAWTPDGSKLAYVTFESGRSALVIQTLSNGAVRQVASFPRHNGAPAFSPDGSKLAFALSKTGSLNLYVMDVGSGQIRQVTDGRSNNTEPTWFPDSQNLAFTSDQAGRPQVYKVNVNGGTPQRITWEGSQNQDADVSSDGKTMVMVSSAGGQQHIAKQDLVTGGVQVLSSTFLDETPSLAPNGTMVIYSSSQGMGSVLNLVSTDGRFKARLPATDGQVKSPAWSPYL.

The first 21 residues, 1-21 (MKQALRVAVSFFMLWAAVLHA), serve as a signal peptide directing secretion.

This sequence belongs to the TolB family. As to quaternary structure, the Tol-Pal system is composed of five core proteins: the inner membrane proteins TolA, TolQ and TolR, the periplasmic protein TolB and the outer membrane protein Pal. They form a network linking the inner and outer membranes and the peptidoglycan layer.

It localises to the periplasm. Functionally, part of the Tol-Pal system, which plays a role in outer membrane invagination during cell division and is important for maintaining outer membrane integrity. TolB occupies a key intermediary position in the Tol-Pal system because it communicates directly with both membrane-embedded components, Pal in the outer membrane and TolA in the inner membrane. The sequence is that of Tol-Pal system protein TolB from Enterobacter sp. (strain 638).